The following is a 441-amino-acid chain: AP-2 complex subunit mu (441 aa).

The region spanning 174 to 440 is the MHD domain; sequence RNELFLDVIE…IGRSGLYETR (267 aa).

This sequence belongs to the adapter complexes medium subunit family. Adapter protein complex 2 (AP-2) is a heterotetramer composed of two large adaptins (alpha-type subunit and beta-type subunits), a medium adaptin (mu-type subunit AP50) and a small adaptin (sigma-type subunit AP17). In terms of tissue distribution, brain, heart, lung, liver, testis and spleen.

The protein localises to the cell membrane. The protein resides in the membrane. It localises to the coated pit. Functionally, component of the adapter complexes which link clathrin to receptors in coated vesicles. Clathrin-associated protein complexes are believed to interact with the cytoplasmic tails of membrane proteins, leading to their selection and concentration. AP50 is a subunit of the plasma membrane adapter. Essential wnt/egl-20 signaling protein that functions in wnt/egl-20-producing cells. Required for the AP-2 complex-mediated endocytosis of membrane proteins including wntless homolog mig-14 in egl-20-producing cells. During development, regulates the migration of HSN neurons and the left and right Q neuroblasts (QL and QR, respectively) and their descendants, possibly through hox gene and wnt/egl-20 gene target mab-5, and plays a role in establishing ALM and PLM neuronal cell polarity. Regulates AWB sensory neuron cilia membrane expansion during development, potentially via localization of tub-1 and PtdIns(4,5)P2 to the ciliary base. Required for the asymmetric divisions of V5 cells. This Caenorhabditis elegans protein is AP-2 complex subunit mu (dpy-23).